The following is a 256-amino-acid chain: Small ribosomal subunit protein eS1 (256 aa).

A compositionally biased stretch (basic residues) spans 1–18; the sequence is MAVGKNKRLSKGKKGLKK. The disordered stretch occupies residues 1–22; that stretch reads MAVGKNKRLSKGKKGLKKKTQD. N-acetylalanine; partial is present on Ala2.

It belongs to the eukaryotic ribosomal protein eS1 family. Component of the small ribosomal subunit (SSU). Mature N.crassa ribosomes consist of a small (40S) and a large (60S) subunit. The 40S small subunit contains 1 molecule of ribosomal RNA (18S rRNA) and at least 32 different proteins. The large 60S subunit contains 3 rRNA molecules (26S, 5.8S and 5S rRNA) and at least 42 different proteins.

It is found in the cytoplasm. Its function is as follows. Component of the ribosome, a large ribonucleoprotein complex responsible for the synthesis of proteins in the cell. The small ribosomal subunit (SSU) binds messenger RNAs (mRNAs) and translates the encoded message by selecting cognate aminoacyl-transfer RNA (tRNA) molecules. The large subunit (LSU) contains the ribosomal catalytic site termed the peptidyl transferase center (PTC), which catalyzes the formation of peptide bonds, thereby polymerizing the amino acids delivered by tRNAs into a polypeptide chain. The nascent polypeptides leave the ribosome through a tunnel in the LSU and interact with protein factors that function in enzymatic processing, targeting, and the membrane insertion of nascent chains at the exit of the ribosomal tunnel. The polypeptide is Small ribosomal subunit protein eS1 (rps1) (Neurospora crassa (strain ATCC 24698 / 74-OR23-1A / CBS 708.71 / DSM 1257 / FGSC 987)).